The sequence spans 286 residues: Putative thiosulfate sulfurtransferase (286 aa).

The 108-residue stretch at 27-134 (DDPAYRLVEV…WVDNDYPTTD (108 aa)) folds into the Rhodanese 1 domain. Residues Lys-162 and Lys-166 each participate in a glycyl lysine isopeptide (Lys-Gly) (interchain with G-Cter in SAMP2) cross-link. One can recognise a Rhodanese 2 domain in the interval 164-283 (VDKGLPLVDV…WGNLVGAPVE (120 aa)). Catalysis depends on Cys-242, which acts as the Cysteine persulfide intermediate. Position 247 (Arg-247) interacts with substrate.

The catalysed reaction is thiosulfate + hydrogen cyanide = thiocyanate + sulfite + 2 H(+). Its function is as follows. May be a sulfotransferase involved in the formation of thiosulfate. The polypeptide is Putative thiosulfate sulfurtransferase (tssA) (Haloferax volcanii (strain ATCC 29605 / DSM 3757 / JCM 8879 / NBRC 14742 / NCIMB 2012 / VKM B-1768 / DS2) (Halobacterium volcanii)).